The chain runs to 129 residues: Small ribosomal subunit protein uS11 (129 aa).

The protein belongs to the universal ribosomal protein uS11 family. In terms of assembly, part of the 30S ribosomal subunit. Interacts with proteins S7 and S18. Binds to IF-3.

Its function is as follows. Located on the platform of the 30S subunit, it bridges several disparate RNA helices of the 16S rRNA. Forms part of the Shine-Dalgarno cleft in the 70S ribosome. This chain is Small ribosomal subunit protein uS11, found in Mycoplasma mycoides subsp. mycoides SC (strain CCUG 32753 / NCTC 10114 / PG1).